A 376-amino-acid polypeptide reads, in one-letter code: DNA replication and repair protein RecF (376 aa).

30 to 37 is an ATP binding site; it reads GNNAQGKS.

This sequence belongs to the RecF family.

The protein localises to the cytoplasm. Functionally, the RecF protein is involved in DNA metabolism; it is required for DNA replication and normal SOS inducibility. RecF binds preferentially to single-stranded, linear DNA. It also seems to bind ATP. The protein is DNA replication and repair protein RecF of Trichormus variabilis (strain ATCC 29413 / PCC 7937) (Anabaena variabilis).